Here is a 58-residue protein sequence, read N- to C-terminus: Large ribosomal subunit protein bL32 (58 aa).

The protein belongs to the bacterial ribosomal protein bL32 family.

The polypeptide is Large ribosomal subunit protein bL32 (Staphylococcus aureus (strain NCTC 8325 / PS 47)).